The chain runs to 307 residues: Probable porphobilinogen deaminase (307 aa).

At C240 the chain carries S-(dipyrrolylmethanemethyl)cysteine.

This sequence belongs to the HMBS family. Dipyrromethane serves as cofactor.

The enzyme catalyses 4 porphobilinogen + H2O = hydroxymethylbilane + 4 NH4(+). It participates in porphyrin-containing compound metabolism; protoporphyrin-IX biosynthesis; coproporphyrinogen-III from 5-aminolevulinate: step 2/4. Tetrapolymerization of the monopyrrole PBG into the hydroxymethylbilane pre-uroporphyrinogen in several discrete steps. The polypeptide is Probable porphobilinogen deaminase (hemC) (Aeropyrum pernix (strain ATCC 700893 / DSM 11879 / JCM 9820 / NBRC 100138 / K1)).